The following is a 411-amino-acid chain: Na(+)-translocating NADH-quinone reductase subunit B (411 aa).

The next 3 membrane-spanning stretches (helical) occupy residues 56–76 (IMIT…YNAG), 121–141 (FLPI…LFAV), and 161–181 (ILPA…GVVI). An FMN phosphoryl threonine modification is found at threonine 228. The next 5 helical transmembrane spans lie at 254–274 (FIPG…AAVL), 284–304 (IMLG…AIGS), 309–329 (MFGM…GMVF), 345–365 (LLFG…NPAF), and 368–388 (GIML…HFFV).

Belongs to the NqrB/RnfD family. In terms of assembly, composed of six subunits; NqrA, NqrB, NqrC, NqrD, NqrE and NqrF. The cofactor is FMN.

Its subcellular location is the cell inner membrane. It carries out the reaction a ubiquinone + n Na(+)(in) + NADH + H(+) = a ubiquinol + n Na(+)(out) + NAD(+). In terms of biological role, NQR complex catalyzes the reduction of ubiquinone-1 to ubiquinol by two successive reactions, coupled with the transport of Na(+) ions from the cytoplasm to the periplasm. NqrA to NqrE are probably involved in the second step, the conversion of ubisemiquinone to ubiquinol. In Chromohalobacter salexigens (strain ATCC BAA-138 / DSM 3043 / CIP 106854 / NCIMB 13768 / 1H11), this protein is Na(+)-translocating NADH-quinone reductase subunit B.